Reading from the N-terminus, the 430-residue chain is Adenylosuccinate synthetase (430 aa).

GTP contacts are provided by residues 12 to 18 (GDEGKGK) and 40 to 42 (GHT). Residue D13 is the Proton acceptor of the active site. D13 and G40 together coordinate Mg(2+). IMP-binding positions include 13–16 (DEGK), 38–41 (NAGH), T128, R142, Q223, T238, and R302. H41 (proton donor) is an active-site residue. 298 to 304 (TTTGRPR) contacts substrate. Residues R304, 330–332 (SID), and 412–414 (SVG) each bind GTP.

The protein belongs to the adenylosuccinate synthetase family. In terms of assembly, homodimer. Requires Mg(2+) as cofactor.

The protein resides in the cytoplasm. The catalysed reaction is IMP + L-aspartate + GTP = N(6)-(1,2-dicarboxyethyl)-AMP + GDP + phosphate + 2 H(+). The protein operates within purine metabolism; AMP biosynthesis via de novo pathway; AMP from IMP: step 1/2. Its function is as follows. Plays an important role in the de novo pathway of purine nucleotide biosynthesis. Catalyzes the first committed step in the biosynthesis of AMP from IMP. The polypeptide is Adenylosuccinate synthetase (Streptococcus gordonii (strain Challis / ATCC 35105 / BCRC 15272 / CH1 / DL1 / V288)).